A 327-amino-acid chain; its full sequence is N-acetylmuramoyl-L-alanine amidase sle1 (327 aa).

The signal sequence occupies residues methionine 1–alanine 25. LysM domains lie at threonine 27–valine 70, serine 86–valine 129, and threonine 150–valine 193. The tract at residues leucine 68 to threonine 89 is disordered. The span at serine 71–threonine 87 shows a compositional bias: low complexity. Positions glycine 203–histidine 327 constitute a Peptidase C51 domain.

The protein resides in the secreted. The protein localises to the cell surface. The catalysed reaction is Hydrolyzes the link between N-acetylmuramoyl residues and L-amino acid residues in certain cell-wall glycopeptides.. In terms of biological role, peptidoglycan hydrolase involved in the splitting of the septum during cell division. The sequence is that of N-acetylmuramoyl-L-alanine amidase sle1 (sle1) from Staphylococcus saprophyticus subsp. saprophyticus (strain ATCC 15305 / DSM 20229 / NCIMB 8711 / NCTC 7292 / S-41).